Reading from the N-terminus, the 492-residue chain is Catalase isozyme 1 (492 aa).

Active-site residues include His65 and Asn138. Tyr348 contacts heme.

The protein belongs to the catalase family. As to quaternary structure, homotetramer. Heme serves as cofactor. As to expression, in whole endosperms (aleurones plus starchy endosperm), in isolated aleurones and in developing seeds.

Its subcellular location is the peroxisome. It localises to the glyoxysome. It carries out the reaction 2 H2O2 = O2 + 2 H2O. Functionally, occurs in almost all aerobically respiring organisms and serves to protect cells from the toxic effects of hydrogen peroxide. The sequence is that of Catalase isozyme 1 (CAT1) from Hordeum vulgare (Barley).